The following is an 811-amino-acid chain: Vacuolar protein sorting-associated protein 70 (811 aa).

Residues 1–21 are compositionally biased toward basic and acidic residues; sequence MRMIQRERKREKEEGQLKERT. Residues 1 to 63 are disordered; sequence MRMIQRERKR…MNDSFTLTSR (63 aa). Asn-55 carries an N-linked (GlcNAc...) asparagine glycan. Residues 90–110 form a helical membrane-spanning segment; it reads FMYLILASLLLYMGFVAAFAP. N-linked (GlcNAc...) asparagine glycosylation is present at Asn-237. A disordered region spans residues 334–367; the sequence is FSDTPGDPTTPGYPSKDSDTEHMSPVGRVPRIPS. Over residues 336 to 345 the composition is skewed to low complexity; sequence DTPGDPTTPG. Zn(2+) contacts are provided by His-445, Asp-456, and Asp-522. N-linked (GlcNAc...) asparagine glycosylation is found at Asn-568 and Asn-599. His-607 provides a ligand contact to Zn(2+). Asn-670 carries an N-linked (GlcNAc...) asparagine glycan.

This sequence belongs to the peptidase M28 family. M28B subfamily. Zn(2+) is required as a cofactor.

Its subcellular location is the membrane. Involved in vacuolar protein sorting. In Saccharomyces cerevisiae (strain ATCC 204508 / S288c) (Baker's yeast), this protein is Vacuolar protein sorting-associated protein 70 (VPS70).